The primary structure comprises 198 residues: NADH-quinone oxidoreductase subunit C (198 aa).

It belongs to the complex I 30 kDa subunit family. NDH-1 is composed of 14 different subunits. Subunits NuoB, C, D, E, F, and G constitute the peripheral sector of the complex.

The protein localises to the cell inner membrane. The enzyme catalyses a quinone + NADH + 5 H(+)(in) = a quinol + NAD(+) + 4 H(+)(out). In terms of biological role, NDH-1 shuttles electrons from NADH, via FMN and iron-sulfur (Fe-S) centers, to quinones in the respiratory chain. The immediate electron acceptor for the enzyme in this species is believed to be ubiquinone. Couples the redox reaction to proton translocation (for every two electrons transferred, four hydrogen ions are translocated across the cytoplasmic membrane), and thus conserves the redox energy in a proton gradient. This is NADH-quinone oxidoreductase subunit C from Janthinobacterium sp. (strain Marseille) (Minibacterium massiliensis).